Reading from the N-terminus, the 128-residue chain is 3-aminoacrylate deaminase RutC (128 aa).

Belongs to the RutC family. In terms of assembly, homotrimer.

It catalyses the reaction (Z)-3-aminoacrylate + H2O + H(+) = 3-oxopropanoate + NH4(+). In terms of biological role, involved in pyrimidine catabolism. Catalyzes the deamination of 3-aminoacrylate to malonic semialdehyde, a reaction that can also occur spontaneously. RutC may facilitate the reaction and modulate the metabolic fitness, rather than catalyzing essential functions. The polypeptide is 3-aminoacrylate deaminase RutC (Shigella flexneri serotype X (strain 2002017)).